A 430-amino-acid chain; its full sequence is Gamma-glutamyl phosphate reductase (430 aa).

The protein belongs to the gamma-glutamyl phosphate reductase family.

It localises to the cytoplasm. It carries out the reaction L-glutamate 5-semialdehyde + phosphate + NADP(+) = L-glutamyl 5-phosphate + NADPH + H(+). Its pathway is amino-acid biosynthesis; L-proline biosynthesis; L-glutamate 5-semialdehyde from L-glutamate: step 2/2. Functionally, catalyzes the NADPH-dependent reduction of L-glutamate 5-phosphate into L-glutamate 5-semialdehyde and phosphate. The product spontaneously undergoes cyclization to form 1-pyrroline-5-carboxylate. The sequence is that of Gamma-glutamyl phosphate reductase from Polaromonas naphthalenivorans (strain CJ2).